We begin with the raw amino-acid sequence, 227 residues long: NADH-quinone oxidoreductase subunit C (227 aa).

The protein belongs to the complex I 30 kDa subunit family. In terms of assembly, NDH-1 is composed of 14 different subunits. Subunits NuoB, C, D, E, F, and G constitute the peripheral sector of the complex.

Its subcellular location is the cell inner membrane. It carries out the reaction a quinone + NADH + 5 H(+)(in) = a quinol + NAD(+) + 4 H(+)(out). NDH-1 shuttles electrons from NADH, via FMN and iron-sulfur (Fe-S) centers, to quinones in the respiratory chain. The immediate electron acceptor for the enzyme in this species is believed to be ubiquinone. Couples the redox reaction to proton translocation (for every two electrons transferred, four hydrogen ions are translocated across the cytoplasmic membrane), and thus conserves the redox energy in a proton gradient. This chain is NADH-quinone oxidoreductase subunit C, found in Legionella pneumophila (strain Lens).